A 380-amino-acid polypeptide reads, in one-letter code: Crotonobetainyl-CoA reductase (380 aa).

It belongs to the acyl-CoA dehydrogenase family. Homotetramer. FAD is required as a cofactor.

The protein localises to the cytoplasm. It catalyses the reaction 4-(trimethylamino)butanoyl-CoA + oxidized [electron-transfer flavoprotein] + H(+) = crotonobetainyl-CoA + reduced [electron-transfer flavoprotein]. It participates in amine and polyamine metabolism; carnitine metabolism. In terms of biological role, catalyzes the reduction of crotonobetainyl-CoA to gamma-butyrobetainyl-CoA. The sequence is that of Crotonobetainyl-CoA reductase from Escherichia coli (strain UTI89 / UPEC).